The primary structure comprises 194 residues: Protein GrpE (194 aa).

The disordered stretch occupies residues 1–39 (MTNHEQDQQDNSELLDDDQVTLESQQAADSGAEAPASDD). Residues 8 to 20 (QQDNSELLDDDQV) show a composition bias toward acidic residues.

The protein belongs to the GrpE family. As to quaternary structure, homodimer.

Its subcellular location is the cytoplasm. Functionally, participates actively in the response to hyperosmotic and heat shock by preventing the aggregation of stress-denatured proteins, in association with DnaK and GrpE. It is the nucleotide exchange factor for DnaK and may function as a thermosensor. Unfolded proteins bind initially to DnaJ; upon interaction with the DnaJ-bound protein, DnaK hydrolyzes its bound ATP, resulting in the formation of a stable complex. GrpE releases ADP from DnaK; ATP binding to DnaK triggers the release of the substrate protein, thus completing the reaction cycle. Several rounds of ATP-dependent interactions between DnaJ, DnaK and GrpE are required for fully efficient folding. In Saccharophagus degradans (strain 2-40 / ATCC 43961 / DSM 17024), this protein is Protein GrpE.